Consider the following 139-residue polypeptide: Dehydrin DHN1 (139 aa).

Residues 1-139 (MEYQGQHGHA…IKEKLPGGQH (139 aa)) are disordered. The span at 23 to 42 (GHGGFTGGPTGTHGAAGVGG) shows a compositional bias: gly residues. The segment covering 49–58 (RDGHKTDGVL) has biased composition (basic and acidic residues). Residues 59 to 68 (RRSGSSSSSS) are compositionally biased toward low complexity. Residues 83–98 (KEKIKEKLPGGAHKDA) are compositionally biased toward basic and acidic residues. The segment covering 99–109 (AGQQQQTAMAG) has biased composition (low complexity). Residues 120 to 139 (TGEKKGVMDKIKEKLPGGQH) are compositionally biased toward basic and acidic residues.

It belongs to the plant dehydrin family.

This Hordeum vulgare (Barley) protein is Dehydrin DHN1 (DHN1).